A 289-amino-acid chain; its full sequence is ATP synthase mitochondrial F1 complex assembly factor 2 (289 aa).

The transit peptide at 1 to 40 directs the protein to the mitochondrion; it reads MWRSCLRLRDGGRRLLNRPAGGPSASMSPGPTIPSPARAY. The tract at residues 13 to 40 is disordered; it reads RRLLNRPAGGPSASMSPGPTIPSPARAY. An N6-succinyllysine modification is found at Lys-133.

It belongs to the ATP12 family. In terms of assembly, interacts with ATP5F1B; involved in the assembly of the F1 component of the mitochondrial ATP synthase (ATPase). Interacts with FMC1. As to expression, widely expressed.

The protein localises to the mitochondrion inner membrane. Its function is as follows. Plays a role in the assembly of the F1 component of the mitochondrial ATP synthase (ATPase). The sequence is that of ATP synthase mitochondrial F1 complex assembly factor 2 from Homo sapiens (Human).